The sequence spans 484 residues: MDYFKTSIDQLHEQLRSGKVTSSQLVDETLAGINQLDAEVDAFLALNADGAKEKAAAVDAAGIADDQPLAGVPIAIKDNIVTKGVVTTAASKILANFNPIYDATVIQKLDAAGAINVGKTNMDEFAMGSSTENSAFKTTKNAWDHTRVPGGSSGGSAAAVAAGEVIAALGSDTGGSIRQPAAFNGIVGVKPTYGRVSRWGLIAFSSSLDQIGTLTRHVKDAAQLLNVIAGHDERDSTTADTPVPDFTAKIGQDIKGMKIALPKEYLGKGVDPAVADKIKAAAKQFEDMGATVTEVSLPHTQYAVPSYYIIASSEASSNLQRFDGIRYGFRAKDVKNIEDVYVRSRSEGFGPEVKRRIMLGTFSLSAGFYDAYFKKAGQVRTLITRDFEDVFKDYDLIIGPTTPTVAFKIGEKVTDPVTMYMNDILTIPVNLAGLPAASVPAGFVDGMPVGLQLIGKHFDESTIFQVAAAFEAQNDYLAQIPGGK.

Residues Lys-77 and Ser-152 each act as charge relay system in the active site. The active-site Acyl-ester intermediate is the Ser-176.

This sequence belongs to the amidase family. GatA subfamily. In terms of assembly, heterotrimer of A, B and C subunits.

It carries out the reaction L-glutamyl-tRNA(Gln) + L-glutamine + ATP + H2O = L-glutaminyl-tRNA(Gln) + L-glutamate + ADP + phosphate + H(+). Allows the formation of correctly charged Gln-tRNA(Gln) through the transamidation of misacylated Glu-tRNA(Gln) in organisms which lack glutaminyl-tRNA synthetase. The reaction takes place in the presence of glutamine and ATP through an activated gamma-phospho-Glu-tRNA(Gln). In Lacticaseibacillus paracasei (strain ATCC 334 / BCRC 17002 / CCUG 31169 / CIP 107868 / KCTC 3260 / NRRL B-441) (Lactobacillus paracasei), this protein is Glutamyl-tRNA(Gln) amidotransferase subunit A.